A 141-amino-acid polypeptide reads, in one-letter code: MAKKITAVIKLALQAGKANPAPPVGPALGQHGVNIMAFCKEYNARTQDKAGFVIPVEISVFEDRSFTFITKTPPASVLITKAAGIAKGSGDSAKGQAGSINRAQLEEIAKTKLPDLNCNNIESAMKVIAGTARNMGVSVSD.

This sequence belongs to the universal ribosomal protein uL11 family. Part of the ribosomal stalk of the 50S ribosomal subunit. Interacts with L10 and the large rRNA to form the base of the stalk. L10 forms an elongated spine to which L12 dimers bind in a sequential fashion forming a multimeric L10(L12)X complex. In terms of processing, one or more lysine residues are methylated.

In terms of biological role, forms part of the ribosomal stalk which helps the ribosome interact with GTP-bound translation factors. This is Large ribosomal subunit protein uL11 from Prochlorococcus marinus (strain SARG / CCMP1375 / SS120).